The sequence spans 188 residues: Elongation factor P (188 aa).

Belongs to the elongation factor P family.

The protein localises to the cytoplasm. The protein operates within protein biosynthesis; polypeptide chain elongation. Its function is as follows. Involved in peptide bond synthesis. Stimulates efficient translation and peptide-bond synthesis on native or reconstituted 70S ribosomes in vitro. Probably functions indirectly by altering the affinity of the ribosome for aminoacyl-tRNA, thus increasing their reactivity as acceptors for peptidyl transferase. This chain is Elongation factor P, found in Caulobacter sp. (strain K31).